The following is a 343-amino-acid chain: Cyclin-Y-like protein 1-B (343 aa).

A disordered region spans residues 1-69 (MGNTVTCCVS…ECNPSDHPQA (69 aa)). Residues 17–28 (AGRDRRVAERGE) show a composition bias toward basic and acidic residues. The Cyclin N-terminal domain occupies 145 to 267 (DIFDEKLHPL…FLELLQFNIN (123 aa)).

It belongs to the cyclin family. Cyclin Y subfamily.

In Xenopus laevis (African clawed frog), this protein is Cyclin-Y-like protein 1-B (ccnyl1-b).